Reading from the N-terminus, the 232-residue chain is 2,3,4,5-tetrahydropyridine-2,6-dicarboxylate N-acetyltransferase (232 aa).

This sequence belongs to the transferase hexapeptide repeat family. DapH subfamily.

The enzyme catalyses (S)-2,3,4,5-tetrahydrodipicolinate + acetyl-CoA + H2O = L-2-acetamido-6-oxoheptanedioate + CoA. It functions in the pathway amino-acid biosynthesis; L-lysine biosynthesis via DAP pathway; LL-2,6-diaminopimelate from (S)-tetrahydrodipicolinate (acetylase route): step 1/3. In terms of biological role, catalyzes the transfer of an acetyl group from acetyl-CoA to tetrahydrodipicolinate. The protein is 2,3,4,5-tetrahydropyridine-2,6-dicarboxylate N-acetyltransferase of Streptococcus pneumoniae (strain CGSP14).